Reading from the N-terminus, the 348-residue chain is sn-glycerol-3-phosphate import ATP-binding protein UgpC (348 aa).

In terms of domain architecture, ABC transporter spans 4–235 (IQLSNIKKQY…PETTFVADFI (232 aa)). 37–44 (GPSGCGKS) lines the ATP pocket.

It belongs to the ABC transporter superfamily. sn-glycerol-3-phosphate importer (TC 3.A.1.1.3) family. In terms of assembly, the complex is composed of two ATP-binding proteins (UgpC), two transmembrane proteins (UgpA and UgpE) and a solute-binding protein (UgpB).

It is found in the cell inner membrane. It catalyses the reaction sn-glycerol 3-phosphate(out) + ATP + H2O = sn-glycerol 3-phosphate(in) + ADP + phosphate + H(+). Its function is as follows. Part of the ABC transporter complex UgpBAEC involved in sn-glycerol-3-phosphate (G3P) import. Responsible for energy coupling to the transport system. The polypeptide is sn-glycerol-3-phosphate import ATP-binding protein UgpC (Bartonella quintana (strain Toulouse) (Rochalimaea quintana)).